The following is a 263-amino-acid chain: Chorismate mutase 2 (263 aa).

One can recognise a Chorismate mutase domain in the interval 3-256 (CGDYDDKLSL…QVEYLLRRLD (254 aa)).

In terms of assembly, homodimer. In terms of tissue distribution, expressed in root, stem, stigma, anther, leaf, petal tube, petal limb and sepal tissues with highest levels in petal tubes and stems.

Its subcellular location is the cytoplasm. It localises to the cytosol. The enzyme catalyses chorismate = prephenate. It participates in metabolic intermediate biosynthesis; prephenate biosynthesis; prephenate from chorismate: step 1/1. With respect to regulation, no allosteric regulation. Mediates the conversion of chorismate to prephenate. The polypeptide is Chorismate mutase 2 (Petunia hybrida (Petunia)).